The following is a 427-amino-acid chain: MWKHVKQVDPEIYEVLVNELKRQEYGLELIASENFASLAVIETMGSMLTNKYAEGYPQKRYYGGCEWVDRAEELAIERAKRLFGAKFANVQPHSGSQANMAVYLALAQPGDTIMGMSLSHGGHLTHGAPVNFSGKIFKVVPYGVNLETETIDYDEVRRLALEHKPKIIVAGGSAYARIIDFKRFREIADEVGAYLMVDMAHFAGLVAAGIHPNPLEYAHVVTSTTHKTLRGPRGGLILTNDPDIAKAVDKTIFPGIQGGPLMHVIAAKAVCFKEAMTEEFKEYQKQVVKNAKKMAEEFQKRGYRIVSGGTDTHLFLVDLTPKDITGKAAEKALESCGITVNKNTIPNEKRSPFVASGIRIGTPAVTTRGMKEEEMEEIAEMIDLVLSNVTDENGTVKPEVREEVSKRVRELCERFPLYRDKIEGVEI.

(6S)-5,6,7,8-tetrahydrofolate is bound by residues leucine 118 and 122–124; that span reads GHL. Lysine 227 is subject to N6-(pyridoxal phosphate)lysine. 351–353 is a (6S)-5,6,7,8-tetrahydrofolate binding site; sequence SPF.

Belongs to the SHMT family. Homodimer. The cofactor is pyridoxal 5'-phosphate.

The protein resides in the cytoplasm. It carries out the reaction (6R)-5,10-methylene-5,6,7,8-tetrahydrofolate + glycine + H2O = (6S)-5,6,7,8-tetrahydrofolate + L-serine. It participates in one-carbon metabolism; tetrahydrofolate interconversion. It functions in the pathway amino-acid biosynthesis; glycine biosynthesis; glycine from L-serine: step 1/1. Its function is as follows. Catalyzes the reversible interconversion of serine and glycine with tetrahydrofolate (THF) serving as the one-carbon carrier. This reaction serves as the major source of one-carbon groups required for the biosynthesis of purines, thymidylate, methionine, and other important biomolecules. Also exhibits THF-independent aldolase activity toward beta-hydroxyamino acids, producing glycine and aldehydes, via a retro-aldol mechanism. This is Serine hydroxymethyltransferase from Thermotoga petrophila (strain ATCC BAA-488 / DSM 13995 / JCM 10881 / RKU-1).